Reading from the N-terminus, the 453-residue chain is Allantoinase (453 aa).

Zn(2+)-binding residues include His-59, His-61, Lys-146, His-186, His-242, and Asp-315. N6-carboxylysine is present on Lys-146.

It belongs to the metallo-dependent hydrolases superfamily. Allantoinase family. Homotetramer. Zn(2+) is required as a cofactor. Carboxylation allows a single lysine to coordinate two zinc ions.

It catalyses the reaction (S)-allantoin + H2O = allantoate + H(+). It functions in the pathway nitrogen metabolism; (S)-allantoin degradation; allantoate from (S)-allantoin: step 1/1. Functionally, catalyzes the conversion of allantoin (5-ureidohydantoin) to allantoic acid by hydrolytic cleavage of the five-member hydantoin ring. This is Allantoinase from Escherichia coli O127:H6 (strain E2348/69 / EPEC).